We begin with the raw amino-acid sequence, 364 residues long: Chorismate synthase (364 aa).

Arg-48 and Arg-54 together coordinate NADP(+). FMN is bound by residues 125–127 (RSS), 238–239 (NA), Gly-278, 293–297 (KPTSS), and Arg-319.

The protein belongs to the chorismate synthase family. As to quaternary structure, homotetramer. FMNH2 serves as cofactor.

It catalyses the reaction 5-O-(1-carboxyvinyl)-3-phosphoshikimate = chorismate + phosphate. The protein operates within metabolic intermediate biosynthesis; chorismate biosynthesis; chorismate from D-erythrose 4-phosphate and phosphoenolpyruvate: step 7/7. In terms of biological role, catalyzes the anti-1,4-elimination of the C-3 phosphate and the C-6 proR hydrogen from 5-enolpyruvylshikimate-3-phosphate (EPSP) to yield chorismate, which is the branch point compound that serves as the starting substrate for the three terminal pathways of aromatic amino acid biosynthesis. This reaction introduces a second double bond into the aromatic ring system. The sequence is that of Chorismate synthase from Marinobacter nauticus (strain ATCC 700491 / DSM 11845 / VT8) (Marinobacter aquaeolei).